A 359-amino-acid polypeptide reads, in one-letter code: 3-isopropylmalate dehydrogenase (359 aa).

74 to 85 (GPKWGTGSVRPE) is an NAD(+) binding site. Substrate is bound by residues arginine 92, arginine 102, arginine 131, and aspartate 220. Mg(2+) is bound by residues aspartate 220, aspartate 245, and aspartate 249. An NAD(+)-binding site is contributed by 284–295 (GSAPDLPANKVN).

Belongs to the isocitrate and isopropylmalate dehydrogenases family. In terms of assembly, homodimer. It depends on Mg(2+) as a cofactor. The cofactor is Mn(2+).

The protein resides in the cytoplasm. It carries out the reaction (2R,3S)-3-isopropylmalate + NAD(+) = 4-methyl-2-oxopentanoate + CO2 + NADH. It participates in amino-acid biosynthesis; L-leucine biosynthesis; L-leucine from 3-methyl-2-oxobutanoate: step 3/4. Catalyzes the oxidation of 3-carboxy-2-hydroxy-4-methylpentanoate (3-isopropylmalate) to 3-carboxy-4-methyl-2-oxopentanoate. The product decarboxylates to 4-methyl-2 oxopentanoate. The sequence is that of 3-isopropylmalate dehydrogenase (LEU2) from Kluyveromyces marxianus (Yeast).